The sequence spans 3225 residues: MLEGLVAGLLNRFLGMYVKNFDPKQLKWEVWNGKVRLDNLELQREALDQLKLPINVIKGHLGHLVLHIPWKTLASEQVKINIEDVFLLASPKEEAEYDEDEEARRRHRLKMEKLDSAELLKERSQEGLSEEEQKRTQTFAQALVTKIVDNLQITIRNIHIRYEDAISAPGHPFALGITLEEFSAVSTDSDWTPAFITSIQSAHKLATLESLAIYWDTDAKLIGPGREPHEHSDQIPHDEMLKFFREMIAKGEADLSSEHQFILKPVSGQAKIEIDKTGSHTVPRYKANLLFDEIGVVLDDQQYRDALMMVDLFHYFIRHQEYKKFQPKGVTPKEDPRAWFRFAGNAVLSKIHERNRRWSWDYFRERRDDRRRYIELFKKTKQNIQLTPEEREDLDKLEWKLSYEDLRFWRSLARNQLKKENAEALKNKPPPQPQQQQGWLSWVWGSKPVQPQQEEQQGDENTRITEAQRKELYEVIQWDEKAALAAEIDVPRDSVRLLIETSLSTGSFTLRQNPHGDARDLISLHFDLFRAKGLTRPDSFLIDISLGGFRVNDNTTPDSLYKEIVRVKDAPNTEGQKRYSIADLELTVDEEAFFELQVEQHPLDGQGDVAVTMKLKPLEIIWNPNVVVGIADFFRPPERHMESINALLETANATVEGLRAQTRAGLQFALEEHKTVNAKLDLQAPLIILPESITTPNSTCLIVDAGHISVNSELVDKETMKQVQSTQDRPCTEEDLRRLEELMYDRFLVKLTSTQVLIGPSVEITKQQLVQRDEKRQLHIVDQINLDFVVAMSILPKAPNLTKLKISGHLPVLQVNASDSKYKHLMRIIEVAIPKLYDVEPVLAPSGSHPTIRPRLASDASTRSRRASFRKASTQFLQFVSQQQEIVLDESDSDDDSEKFEDAKDTSVDEQLRIQQRIFDFKFTVDQLRGSLYRSDPEGKHPDQLLVELVAENFGVEYHLRPYDMSAMVSLGSVTMDDFVENPPAEFKSIVSSGDIEDRKQARDLVRVKFVRVKKESPEFMSVYDGIETNVDVAISTINLVVTRKTLLTLLDFILVTFSNPQPAAPVATRMAVTDQESETNIIVQPPPIESGPIRVKVDLKSIRMILNNDGIRLATLSFNHADVGVYILGRYMRVSAKLGDLSLVDDVNLGVSEDSSLRQLVTIQGNELADFRYEYFDPDKPEKNPGYDSSIYLRAGSVKVNFIEEPFRKIVDFLVKFGKMQAIYNAARMAAANQAQQLQQSQSRIKFDIVVKTPIVVFPRVVMSPKPKRDVITAYLGEIYAQNAFVPLDDSEKADMAMKLTTGIRNIRLTSHFHYSEGRDEVLELIDHVDLGFTIIYAEHKEGIKRPDLEIEGSMSDFNLRITPYQLSALLAISQSVPTVFAADVEQHTADAERDVDVATLERARTMPSYSGASEEKVIDMAPELGTHGEAWTKLDLVFTVNTIGLELINAEEDYPVGDLEAASLSRFSLNSSRLKTRMDSNGSLEAEFVIQAFTIYDTRHRETNKFRRIMTSGNSNVDQLMASITMTGGKDRNIIAMVAIDSPRFIFALDYLFAIQKFITIGTTLPEAPIPEKSPMETPEETSDADSVRVGSSGRHSESSAGSGQQLVPVGSQQQQPVLAASEQATTSIAFRVNIVDAQVILIANPLSSSSEAMVLGTKQVVLSQQHSLTFQISECGMFLCRMDRFDDSRLRIIDDFSVKVAVDMSKPNITQVHADIEPLILRLSLRDILLVMQTIAKASELSGGTPSETASKTVAERKAQQLRAAGLKHRTASGKGTSTLATRTRHASQSAASHSGKTTTLVMQEVAKQTQRFEELILTVEGTRMVLLGDVHELPIIDMSVKTFTIHAENWTSNLKAETAFDMYMNVYNFAKSAWEPLIEPWQVGFGITREAKTGVLSVDVTSKKTFDVTITAATIALLSQSFAFFSKEQDVLTKPRGVEAPYRIRNYTGFDVIISTKRQIPGASPTTEQQLPTMTLRLEDGQEAPWSFEEWEKMRESLMTESSTANSISVQLVGSGFQEVKSIRLTREGEFLFGLKPKTQQVLHKLLVEIKLGKDNIKYVTLRSPLLVENDTGIVVELGVYDAHEGHLLKIERINPGESKPAPVGAAYFKSLLVRPDPGFKYGWSSDTLWWRDLLKRPTKTLVCKSEQYGGEVFYFRLHARWDQANPLTRNYPYMRLKLTAPLTIENLLPYDFKYKIYDRVNKQEWNNFLRKGGSIPVHMVDLSHTFLLGIEMQDTPFQASEFVVINTGNADDFKKDSHLVVKDNAGMPLNLRLHYFRIPDGGGSFKVTVYSPYVILNKTGLDVSVRSKGFMQSARAAAGQTLIDVGGDGQKKARPLMFSFHNDDHRNRALLKAGDSEWSKPQSFDAIGSTTEVVLQTANRNAEIHLGVTVDSGQGKYKMVKVVTLAPRYVIHNKLGEDINIREPSSSFWIPLKHGAHRPLHWLQRGAVKQLCLCYPGVDNQWTAPFNISDLGITHLKIARAGQRQRLIRVEILMEDATIFLNLSMEQRNWPFSMRNESDTEFTFYQVNPTIEEDASEDRSGWRPVRYRLPPRSIMPYAWDFPAAKHKEICICAYNKERHVKLQEIGNLMPMKLALPNGESKTIDINVTADGPTQTLILSNYRQSKSLYRQRSNAGSISGREGFEAKEFDTGTTFRATLRLSGIGVSIINTQLKELAYITLRDVQLRYSDSALYQTFSLAVKWIQIDNQLYGGIFPMILYPSVVPKRAQEIDAHPSLHAMVTRVKDESYGVEYIKYATVLLQEMTVELDEDFIYAVLEFSKIPGASWESTQEEDRLCDDSVDVPQPKQQQAGRDIYFEVLNIQPMQLDLSFVRTERVNVEDKTSSRNPVMFFFNVMTMAIGNINDAPVRFNALMLENVRVSIPVLIQNISNHYSQEALYQIHKILGSADFLGNPVGLFNNISSGFADIFYEPYQGLIMSDRPEDFGLGLARGAGSFFKKSVYGFTDSFSKVTGSFAKGLAAATMDKQFQDRRRITRARNRPKHALFGVTAGANSLISSVASGVGGLARKPLEGAEQEGALGFFKGIGKGVVGLATKPAIGVLDFASNISEGVRNTTTVFSSSEASELDRVRLPRHIAADGIVRPYSQREALGQSWLKQVDNGKYFDEAYIGHLELPTEDMVVMVTYARILLIRSRRLQTEWDVPLKDVQTIAKERTGLSLTLRGGTNGPFIPVAQESGRAFLYRMVAVAVEEFNRRFRGLE.

Positions 1-1390 (MLEGLVAGLL…VFAADVEQHT (1390 aa)) are involved in phospholipid binding. One can recognise a Chorein N-terminal domain in the interval 2 to 115 (LEGLVAGLLN…RHRLKMEKLD (114 aa)). Disordered regions lie at residues 1568-1610 (PEAP…QQLV) and 1768-1799 (AGLKHRTASGKGTSTLATRTRHASQSAASHSG). A compositionally biased stretch (low complexity) spans 1590–1610 (VRVGSSGRHSESSAGSGQQLV). The segment covering 1777 to 1799 (GKGTSTLATRTRHASQSAASHSG) has biased composition (polar residues). An SHR-BD domain is found at 2290–2570 (FKVTVYSPYV…PYAWDFPAAK (281 aa)).

This sequence belongs to the VPS13 family.

Its subcellular location is the membrane. In terms of biological role, mediates the transfer of lipids between membranes at organelle contact sites. Binds phospholipids, including phosphatidylcholine (PC), phosphatidylethanolamine (PE), phosphatidic acid (PA), and phosphatidylserine (PS). May play a role in mitochondrial lipid homeostasis, Golgi vesicle transport, reticulophagy, actin cytoskeleton organization and formation of the prospore membrane. This chain is Intermembrane lipid transfer protein VPS13, found in Chaetomium thermophilum (strain DSM 1495 / CBS 144.50 / IMI 039719) (Thermochaetoides thermophila).